We begin with the raw amino-acid sequence, 176 residues long: Peptide methionine sulfoxide reductase MsrA (176 aa).

The active site involves Cys-10.

The protein belongs to the MsrA Met sulfoxide reductase family.

It catalyses the reaction L-methionyl-[protein] + [thioredoxin]-disulfide + H2O = L-methionyl-(S)-S-oxide-[protein] + [thioredoxin]-dithiol. It carries out the reaction [thioredoxin]-disulfide + L-methionine + H2O = L-methionine (S)-S-oxide + [thioredoxin]-dithiol. Has an important function as a repair enzyme for proteins that have been inactivated by oxidation. Catalyzes the reversible oxidation-reduction of methionine sulfoxide in proteins to methionine. This is Peptide methionine sulfoxide reductase MsrA from Leptospira borgpetersenii serovar Hardjo-bovis (strain JB197).